We begin with the raw amino-acid sequence, 30 residues long: Cyclotide mden-E (30 aa).

The cyclopeptide (Gly-Asn) cross-link spans 1–30 (GIPCGESCVYIPCITAAIGCSCKSKVCYRN). Disulfide bonds link Cys-4-Cys-20, Cys-8-Cys-22, and Cys-13-Cys-27.

It belongs to the cyclotide family. Bracelet subfamily. Post-translationally, this is a cyclic peptide.

Its function is as follows. Probably participates in a plant defense mechanism. The polypeptide is Cyclotide mden-E (Melicytus dentatus (Tree violet)).